The primary structure comprises 353 residues: T-complex protein 1 subunit eta (353 aa).

The protein belongs to the TCP-1 chaperonin family. In terms of assembly, heterooligomeric complex of about 850 to 900 kDa that forms two stacked rings, 12 to 16 nm in diameter.

It localises to the cytoplasm. Its function is as follows. Molecular chaperone; assists the folding of proteins upon ATP hydrolysis. Known to play a role, in vitro, in the folding of actin and tubulin. This chain is T-complex protein 1 subunit eta, found in Tetrahymena thermophila.